A 149-amino-acid chain; its full sequence is Lipoprotein signal peptidase (149 aa).

The next 3 helical transmembrane spans lie at 24–44, 57–77, and 81–101; these read SHIA…LTNL, KMWF…YLLW, and GKWL…GNFI. Residues aspartate 111 and aspartate 127 contribute to the active site. Residues 122 to 142 traverse the membrane as a helical segment; that stretch reads IFNFADSCLTVGVIFILIGVL.

This sequence belongs to the peptidase A8 family.

The protein resides in the cell membrane. It carries out the reaction Release of signal peptides from bacterial membrane prolipoproteins. Hydrolyzes -Xaa-Yaa-Zaa-|-(S,diacylglyceryl)Cys-, in which Xaa is hydrophobic (preferably Leu), and Yaa (Ala or Ser) and Zaa (Gly or Ala) have small, neutral side chains.. It functions in the pathway protein modification; lipoprotein biosynthesis (signal peptide cleavage). Functionally, this protein specifically catalyzes the removal of signal peptides from prolipoproteins. The chain is Lipoprotein signal peptidase from Lactiplantibacillus plantarum (strain ATCC BAA-793 / NCIMB 8826 / WCFS1) (Lactobacillus plantarum).